Reading from the N-terminus, the 212-residue chain is Riboflavin kinase (212 aa).

The segment at 1 to 83 (MTELYCERKT…NLLRYFDIAS (83 aa)) is unknown. Positions 84 to 212 (IKLVGRVVTG…GDRVELEVYL (129 aa)) are riboflavin kinase. A CDP-binding site is contributed by 93 to 98 (GLGEGA). Mg(2+) contacts are provided by threonine 122 and asparagine 124. Residues threonine 179 and glutamate 187 each contribute to the FMN site. 192–195 (VRVR) is a CDP binding site.

It belongs to the archaeal riboflavin kinase family. Mg(2+) serves as cofactor.

The enzyme catalyses riboflavin + CTP = CDP + FMN + H(+). It participates in cofactor biosynthesis; FMN biosynthesis; FMN from riboflavin (CTP route): step 1/1. Its function is as follows. Catalyzes the CTP-dependent phosphorylation of riboflavin (vitamin B2) to form flavin mononucleotide (FMN). This is Riboflavin kinase (ribK) from Pyrobaculum calidifontis (strain DSM 21063 / JCM 11548 / VA1).